The sequence spans 125 residues: MRIAGVDLPRNKHVVIGLTYVYGIGRTTAKKILAKAGVPEDKKVSEVTDDEANEIRTIVTNEYKVEGQARSEQQLAIKRLMDIGCYRGLRHRRGLPARGQRTRTNARTRKGKRKTVAGKKKAGKK.

The segment at 91 to 125 (HRRGLPARGQRTRTNARTRKGKRKTVAGKKKAGKK) is disordered.

It belongs to the universal ribosomal protein uS13 family. Part of the 30S ribosomal subunit. Forms a loose heterodimer with protein S19. Forms two bridges to the 50S subunit in the 70S ribosome.

In terms of biological role, located at the top of the head of the 30S subunit, it contacts several helices of the 16S rRNA. In the 70S ribosome it contacts the 23S rRNA (bridge B1a) and protein L5 of the 50S subunit (bridge B1b), connecting the 2 subunits; these bridges are implicated in subunit movement. Contacts the tRNAs in the A and P-sites. The polypeptide is Small ribosomal subunit protein uS13 (Chloroherpeton thalassium (strain ATCC 35110 / GB-78)).